The primary structure comprises 252 residues: NAP1-related protein 2 (252 aa).

Positions 1 to 15 are enriched in basic and acidic residues; sequence MTAPADKGKKAKTDA. A disordered region spans residues 1–23; it reads MTAPADKGKKAKTDADGGAAEEN. Residues 26 to 67 are a coiled coil; the sequence is IDGALVLSIEKLQEIQDELEKVNEEASDKVLEVEQKYSEIRR. A disordered region spans residues 222-252; it reads YFNNEAEELGEDDDEEGSDADEGEEDEEEEN. A compositionally biased stretch (acidic residues) spans 226-252; that stretch reads EAEELGEDDDEEGSDADEGEEDEEEEN.

The protein belongs to the nucleosome assembly protein (NAP) family.

Its subcellular location is the nucleus. It is found in the cytoplasm. Acts as a histone H2A/H2B chaperone in nucleosome assembly. The protein is NAP1-related protein 2 of Oryza sativa subsp. indica (Rice).